The following is a 541-amino-acid chain: Arginine--tRNA ligase (541 aa).

The 'HIGH' region motif lies at 119-129 (ANPTGPLHIGH).

Belongs to the class-I aminoacyl-tRNA synthetase family. As to quaternary structure, monomer.

It localises to the cytoplasm. The enzyme catalyses tRNA(Arg) + L-arginine + ATP = L-arginyl-tRNA(Arg) + AMP + diphosphate. The sequence is that of Arginine--tRNA ligase from Helicobacter pylori (strain G27).